A 395-amino-acid chain; its full sequence is Cysteine synthase 2 (395 aa).

Residues 6–22 (QDLASGIAMGAVFMYLL) form a helical membrane-spanning segment. An N6-(pyridoxal phosphate)lysine modification is found at Lys-83. Pyridoxal 5'-phosphate is bound by residues 228-232 (GTGGT) and Ser-335.

This sequence belongs to the cysteine synthase/cystathionine beta-synthase family. The cofactor is pyridoxal 5'-phosphate.

It is found in the mitochondrion. Its subcellular location is the mitochondrion outer membrane. The catalysed reaction is O-acetyl-L-serine + hydrogen sulfide = L-cysteine + acetate. Its function is as follows. Putative cysteine synthase that catalyzes the conversion of O-acetyl-L-serine (OAS) into cysteine, the last step in the cysteine biosynthesis pathway. However, in contrast to cysteine synthase cys11, this CS-like protein seems not to function in cysteine biosynthesis, at least under normal growth conditions, although the transcript is produced. This is Cysteine synthase 2 (cys12) from Schizosaccharomyces pombe (strain 972 / ATCC 24843) (Fission yeast).